The sequence spans 255 residues: Kallikrein-4 (255 aa).

A signal peptide spans 1–25; the sequence is MMVTARTPWGWFLGCLILEVTGASA. The propeptide occupies 26-31; that stretch reads SSVSSR. The Peptidase S1 domain maps to 32 to 253; that stretch reads IIQGQDCSPH…FTNWIQTIIQ (222 aa). H41 contacts Zn(2+). C57 and C73 form a disulfide bridge. The active-site Charge relay system is H72. E92 contributes to the Zn(2+) binding site. The active-site Charge relay system is D117. N-linked (GlcNAc...) asparagine glycans are attached at residues N124 and N170. 3 disulfides stabilise this stretch: C149–C214, C179–C193, and C204–C229. Residue S208 is the Charge relay system of the active site.

This sequence belongs to the peptidase S1 family. Kallikrein subfamily. In terms of processing, N-glycosylated. The N-glycan structures are of complex diantennary or triantennary type, which may be further modified with up to 2 sialic acid residues.

Its subcellular location is the secreted. Functionally, has a major role in enamel formation. Required during the maturation stage of tooth development for clearance of enamel proteins and normal structural patterning of the crystalline matrix. This chain is Kallikrein-4, found in Mus musculus (Mouse).